The primary structure comprises 418 residues: MSTAYYLSKLSERRRSVAVMVGDVGVGGDHPIVVQSMTNTDTADIDATVMQVSALWRAGSQLVRITVDRDEAAAAVPKIRERLERLGIFVPLVGDFHYIGHKLLVQHPACAQALAKYRINPGNVGFGAKKDLQFSQIIEIACQYNKPIRIGVNWGSLDEALLTQLMDENAQQEKPLSMAEVMREAVIQSALHSAFAAEKMGLGRDKIILSAKVSDVQDLIAVYTLLAKRSDHALHVGLTEAGMGTKGVVASSAALGILLQQGIGDTIRISLTPEPGGDRTREVKVCQELLQVMGFRQFVPVVAACPGCGRTTSTVFQTLAQKIEANLCKNMPIWREKYPGIERLKVAVMGCIVNGPGESKHADIGISLPGTGELPAAPVFIEGKKVKVLRGHHIAEEFEEILSDYIRTRFGQHEQKRA.

[4Fe-4S] cluster is bound by residues Cys-305, Cys-308, Cys-351, and Glu-358.

Belongs to the IspG family. Requires [4Fe-4S] cluster as cofactor.

It catalyses the reaction (2E)-4-hydroxy-3-methylbut-2-enyl diphosphate + oxidized [flavodoxin] + H2O + 2 H(+) = 2-C-methyl-D-erythritol 2,4-cyclic diphosphate + reduced [flavodoxin]. The protein operates within isoprenoid biosynthesis; isopentenyl diphosphate biosynthesis via DXP pathway; isopentenyl diphosphate from 1-deoxy-D-xylulose 5-phosphate: step 5/6. In terms of biological role, converts 2C-methyl-D-erythritol 2,4-cyclodiphosphate (ME-2,4cPP) into 1-hydroxy-2-methyl-2-(E)-butenyl 4-diphosphate. In Bartonella bacilliformis (strain ATCC 35685 / KC583 / Herrer 020/F12,63), this protein is 4-hydroxy-3-methylbut-2-en-1-yl diphosphate synthase (flavodoxin).